The primary structure comprises 470 residues: 6-phosphofructo-2-kinase/fructose-2,6-bisphosphatase (470 aa).

The segment at 1–249 (MAAVASGQLT…VYYLMNTHVT (249 aa)) is 6-phosphofructo-2-kinase. S31 is modified (phosphoserine; by PKA). Residue 47-55 (GLRRPGKTY) coordinates ATP. Residues R80 and R104 each coordinate beta-D-fructose 6-phosphate. The active site involves D130. Residues T132 and R138 each contribute to the beta-D-fructose 6-phosphate site. C160 is an active-site residue. 169–174 (NIKQVK) provides a ligand contact to ATP. K174, R195, and Y199 together coordinate beta-D-fructose 6-phosphate. A fructose-2,6-bisphosphatase region spans residues 250–469 (PRAIYLSRHG…AEALVTVPEH (220 aa)). R257 serves as a coordination point for beta-D-fructose 2,6-bisphosphate. Catalysis depends on H258, which acts as the Tele-phosphohistidine intermediate. Residues N264 and G270 each coordinate beta-D-fructose 2,6-bisphosphate. The Proton donor/acceptor role is filled by E327. Beta-D-fructose 2,6-bisphosphate contacts are provided by Y338, R352, K356, Y367, Q393, and R397. ATP is bound at residue 349–352 (FALR). Residues 393–397 (QAVMR) and Y429 each bind ATP.

In the C-terminal section; belongs to the phosphoglycerate mutase family. Homodimer. In terms of tissue distribution, liver.

The enzyme catalyses beta-D-fructose 2,6-bisphosphate + H2O = beta-D-fructose 6-phosphate + phosphate. It carries out the reaction beta-D-fructose 6-phosphate + ATP = beta-D-fructose 2,6-bisphosphate + ADP + H(+). Phosphorylation results in inhibition of the kinase activity. Functionally, synthesis and degradation of fructose 2,6-bisphosphate. In Gallus gallus (Chicken), this protein is 6-phosphofructo-2-kinase/fructose-2,6-bisphosphatase.